The primary structure comprises 438 residues: 26S proteasome regulatory subunit 7 homolog (438 aa).

Basic and acidic residues predominate over residues 1-15 (MPPKEDWEKYQKPVD). Residues 1-31 (MPPKEDWEKYQKPVDTEEENDKNPPPLDEGD) are disordered. Ser-90 is subject to Phosphoserine. Residue 220–227 (GPPGTGKT) coordinates ATP.

It belongs to the AAA ATPase family.

It is found in the cytoplasm. The protein localises to the nucleus. Functionally, the 26S proteasome is involved in the ATP-dependent degradation of ubiquitinated proteins. The regulatory (or ATPase) complex confers ATP dependency and substrate specificity to the 26S complex. In Schizosaccharomyces pombe (strain 972 / ATCC 24843) (Fission yeast), this protein is 26S proteasome regulatory subunit 7 homolog (rpt1).